The chain runs to 423 residues: Anthranilate 1,2-dioxygenase large subunit (423 aa).

Positions 53-168 (WNFVALEAEI…VDSYRGLVFA (116 aa)) constitute a Rieske domain. [2Fe-2S] cluster is bound by residues cysteine 95, histidine 97, cysteine 115, and histidine 118. Fe cation-binding residues include histidine 223, histidine 228, and aspartate 370.

Belongs to the bacterial ring-hydroxylating dioxygenase alpha subunit family. As to quaternary structure, part of a multicomponent enzyme system composed of a reductase (AndAa), a ferredoxin (AndAb) and a two-subunit oxygenase component (AndAc and AndAd). It depends on Fe cation as a cofactor. [2Fe-2S] cluster serves as cofactor.

The catalysed reaction is anthranilate + NADH + O2 + 3 H(+) = catechol + NH4(+) + CO2 + NAD(+). The enzyme catalyses anthranilate + NADPH + O2 + 3 H(+) = catechol + NH4(+) + CO2 + NADP(+). It participates in aromatic compound metabolism; anthranilate degradation via hydroxylation; catechol from anthranilate: step 1/1. In terms of biological role, oxygenase component of anthranilate dioxygenase multicomponent enzyme system which catalyzes the incorporation of both atoms of molecular oxygen into anthranilate to form catechol. Can also act on benzoate and salicylate but not on 2-chlorobenzoate or o-toluate. In Burkholderia cepacia (Pseudomonas cepacia), this protein is Anthranilate 1,2-dioxygenase large subunit.